A 961-amino-acid chain; its full sequence is MDELGIPVYKRGFPEHLLRGYEFTIDVGTKIESVGGRHDVTKIPEMNAYDIKQESIRTALWYNPIRNDGIVLPRVLDITLRGYDERRAVVESTRHKSFHTNDQWVQWMMKDSMDAQPLKVGLDDQSRNVAHSLHNCVVKIDSKKADTMSYHVEPIEDASKGCLHTRTMMWNHLVRIETFHTAQEVHILFKPTYDIVVHAERRDRSQPFRPGDQTLINFGRGQKVHMNHNSYDKMVEGLTHLVMRGKMPEVIRDDIASLDEICNRWIQSRHDPGEVKAYELCKILSTIGRKVLDREKEPEDEANLSIRFQEAIDNKFRQHDPERLKIFEHGNQRRDEDRFYILLMIAASDTFNTRVWWSNPYPCLRGTLIASETKLGDVYSMMRSWYDWSVRPTYTPYEKTREQEEYIYGRVNLFDFVAEPGIKIVHWEYRLNHSTREITYAQGNPCDLYPEDDDVIVTKFDDVAYGQMINEMINGGWNQEQFKMHKILKTEGNVLTIDFEKDAKLTTNEGVTMPEYFNKWIIAPMFNANVRIKHEEIAQRQSDDPMVKRTLSPITADPIELQRLTLARFYDIRPALRGQALSRQQAQSTYDEEISKKAGYAEVLKRRGIVQIPKKPCPTVTAQYTLERYALFIINYLQQHVARDCDEEAIYEHPKADHELEIFGESIVDISQVIVLVFDLIFERRRRVRDVYESRYIIARIREMRGKEKLNVIAEFFPTYGSLLNGLSGATVVQDIMYLNFLPLYFLVGDNMIYSHRQWSIPLLLYTHEVMVIPLEVGSYNDRCGLIAYLEYMVFFPSKAIRLSKLNEAHAKIAREMLKYYANTTVYDGGDNSNVVTTKQLLYETYLASLCGGFLDGIVWYLPITHPNKCIVAIEVSDERVPASVRAGRIRLRFPLSARHLKGVVIIQVDLGGRFTVYSEGIVSHRVCKKNLLKYMCDIILLKFSGHVFGNDEMLTKLLNV.

This sequence belongs to the orbivirus VP2 family.

Its subcellular location is the virion. Functionally, the VP2 protein is one of the two proteins (with VP5) which constitute the virus particle outer capsid. It is the major target of the host immunogenic response. Responsible for viral attachment to target host cell, probably by binding to sialic acid. This attachment induces virion internalization predominantly through clathrin-dependent endocytosis. In Bluetongue virus 1 (isolate South Africa vaccine) (BTV 1), this protein is Outer capsid protein VP2 (Segment-2).